We begin with the raw amino-acid sequence, 59 residues long: Large ribosomal subunit protein bL32c (59 aa).

Residues 37-59 (SRSFSSGNEHPKPKGFSGQQANK) are disordered.

The protein belongs to the bacterial ribosomal protein bL32 family.

Its subcellular location is the plastid. The protein localises to the chloroplast. The polypeptide is Large ribosomal subunit protein bL32c (Saccharum hybrid (Sugarcane)).